The sequence spans 63 residues: ATP synthase F(0) complex subunit 8 (63 aa).

Residues 8–24 (MWLLTILSMLLTLFVLF) form a helical membrane-spanning segment. Residue lysine 57 is modified to N6-acetyllysine.

The protein belongs to the ATPase protein 8 family. In terms of assembly, component of the ATP synthase complex composed at least of ATP5F1A/subunit alpha, ATP5F1B/subunit beta, ATP5MC1/subunit c (homooctomer), MT-ATP6/subunit a, MT-ATP8/subunit 8, ATP5ME/subunit e, ATP5MF/subunit f, ATP5MG/subunit g, ATP5MK/subunit k, ATP5MJ/subunit j, ATP5F1C/subunit gamma, ATP5F1D/subunit delta, ATP5F1E/subunit epsilon, ATP5PF/subunit F6, ATP5PB/subunit b, ATP5PD/subunit d, ATP5PO/subunit OSCP. ATP synthase complex consists of a soluble F(1) head domain (subunits alpha(3) and beta(3)) - the catalytic core - and a membrane F(0) domain - the membrane proton channel (subunits c, a, 8, e, f, g, k and j). These two domains are linked by a central stalk (subunits gamma, delta, and epsilon) rotating inside the F1 region and a stationary peripheral stalk (subunits F6, b, d, and OSCP). Interacts with PRICKLE3.

The protein localises to the mitochondrion membrane. Its function is as follows. Subunit 8, of the mitochondrial membrane ATP synthase complex (F(1)F(0) ATP synthase or Complex V) that produces ATP from ADP in the presence of a proton gradient across the membrane which is generated by electron transport complexes of the respiratory chain. ATP synthase complex consist of a soluble F(1) head domain - the catalytic core - and a membrane F(1) domain - the membrane proton channel. These two domains are linked by a central stalk rotating inside the F(1) region and a stationary peripheral stalk. During catalysis, ATP synthesis in the catalytic domain of F(1) is coupled via a rotary mechanism of the central stalk subunits to proton translocation. In vivo, can only synthesize ATP although its ATP hydrolase activity can be activated artificially in vitro. Part of the complex F(0) domain. The sequence is that of ATP synthase F(0) complex subunit 8 from Balaenoptera physalus (Fin whale).